Consider the following 117-residue polypeptide: MHEYSIVSALIEQCEQHALANHAAKITRVDIKLGVMSGVEPSLLQTAFDTFKLDGICNAAQLNIQIQPLVILCQDCQSESVLSERTIVCPACQSYRTRVLDGEDMLLMQLEMEQEED.

His-2 contacts Ni(2+). The Zn(2+) site is built by Cys-73, Cys-76, Cys-89, and Cys-92.

The protein belongs to the HypA/HybF family.

Functionally, involved in the maturation of [NiFe] hydrogenases. Required for nickel insertion into the metal center of the hydrogenase. The protein is Hydrogenase maturation factor HypA of Shewanella baltica (strain OS223).